A 356-amino-acid chain; its full sequence is Phospho-2-dehydro-3-deoxyheptonate aldolase, Tyr-sensitive (356 aa).

The protein belongs to the class-I DAHP synthase family.

The catalysed reaction is D-erythrose 4-phosphate + phosphoenolpyruvate + H2O = 7-phospho-2-dehydro-3-deoxy-D-arabino-heptonate + phosphate. It functions in the pathway metabolic intermediate biosynthesis; chorismate biosynthesis; chorismate from D-erythrose 4-phosphate and phosphoenolpyruvate: step 1/7. In terms of biological role, stereospecific condensation of phosphoenolpyruvate (PEP) and D-erythrose-4-phosphate (E4P) giving rise to 3-deoxy-D-arabino-heptulosonate-7-phosphate (DAHP). The protein is Phospho-2-dehydro-3-deoxyheptonate aldolase, Tyr-sensitive (aroF) of Salmonella typhi.